A 332-amino-acid polypeptide reads, in one-letter code: Cell growth regulator with RING finger domain protein 1 (332 aa).

The RING-type zinc-finger motif lies at 274–309; it reads CVVCQNGGVNWVLLPCRHACLCDSCVRYFKQCPMCR.

It localises to the nucleus. The protein resides in the endoplasmic reticulum. Able to inhibit growth in several cell lines. The protein is Cell growth regulator with RING finger domain protein 1 (Cgrrf1) of Mus musculus (Mouse).